A 352-amino-acid chain; its full sequence is UDP-3-O-acylglucosamine N-acyltransferase (352 aa).

Histidine 244 (proton acceptor) is an active-site residue.

The protein belongs to the transferase hexapeptide repeat family. LpxD subfamily. Homotrimer.

The enzyme catalyses a UDP-3-O-[(3R)-3-hydroxyacyl]-alpha-D-glucosamine + a (3R)-hydroxyacyl-[ACP] = a UDP-2-N,3-O-bis[(3R)-3-hydroxyacyl]-alpha-D-glucosamine + holo-[ACP] + H(+). The protein operates within bacterial outer membrane biogenesis; LPS lipid A biosynthesis. Catalyzes the N-acylation of UDP-3-O-acylglucosamine using 3-hydroxyacyl-ACP as the acyl donor. Is involved in the biosynthesis of lipid A, a phosphorylated glycolipid that anchors the lipopolysaccharide to the outer membrane of the cell. This Anaeromyxobacter sp. (strain Fw109-5) protein is UDP-3-O-acylglucosamine N-acyltransferase.